The sequence spans 270 residues: Mlc titration factor A (270 aa).

Zn(2+)-binding residues include H111, H148, H152, and E211.

The protein belongs to the MtfA family. Interacts with Mlc. It depends on Zn(2+) as a cofactor.

The protein resides in the cytoplasm. In terms of biological role, involved in the modulation of the activity of the glucose-phosphotransferase system (glucose-PTS). Interacts with the transcriptional repressor Mlc, preventing its interaction with DNA and leading to the modulation of expression of genes regulated by Mlc, including ptsG, which encodes the PTS system glucose-specific EIICB component. Its function is as follows. Shows zinc-dependent metallopeptidase activity. In Yersinia pestis bv. Antiqua (strain Nepal516), this protein is Mlc titration factor A.